The chain runs to 491 residues: UDP-N-acetylmuramate--L-alanine ligase (491 aa).

115-121 (GTHGKTT) lines the ATP pocket.

The protein belongs to the MurCDEF family.

The protein localises to the cytoplasm. The catalysed reaction is UDP-N-acetyl-alpha-D-muramate + L-alanine + ATP = UDP-N-acetyl-alpha-D-muramoyl-L-alanine + ADP + phosphate + H(+). It functions in the pathway cell wall biogenesis; peptidoglycan biosynthesis. In terms of biological role, cell wall formation. The sequence is that of UDP-N-acetylmuramate--L-alanine ligase from Parvibaculum lavamentivorans (strain DS-1 / DSM 13023 / NCIMB 13966).